Consider the following 548-residue polypeptide: Chaperonin GroEL (548 aa).

ATP is bound by residues 30 to 33, K51, 87 to 91, G415, 479 to 481, and D495; these read TLGP, DGTTT, and NAA. The segment at 525 to 548 is disordered; that stretch reads PKEDKTSDASSSPAGGMGGMGGMM. Gly residues predominate over residues 539-548; that stretch reads GGMGGMGGMM.

The protein belongs to the chaperonin (HSP60) family. As to quaternary structure, forms a cylinder of 14 subunits composed of two heptameric rings stacked back-to-back. Interacts with the co-chaperonin GroES.

Its subcellular location is the cytoplasm. The catalysed reaction is ATP + H2O + a folded polypeptide = ADP + phosphate + an unfolded polypeptide.. Its function is as follows. Together with its co-chaperonin GroES, plays an essential role in assisting protein folding. The GroEL-GroES system forms a nano-cage that allows encapsulation of the non-native substrate proteins and provides a physical environment optimized to promote and accelerate protein folding. The protein is Chaperonin GroEL of Buchnera aphidicola subsp. Rhopalosiphum maidis.